The sequence spans 564 residues: Quinone-dependent D-lactate dehydrogenase (564 aa).

The region spanning 36–207 (GTGNALAVVR…TNLQEKRYQV (172 aa)) is the FAD-binding PCMH-type domain. FAD is bound by residues 70-74 (AANTG), 78-79 (GS), Gly137, Ser144, Gly154, and Val256.

The protein belongs to the quinone-dependent D-lactate dehydrogenase family. FAD serves as cofactor.

It is found in the cell inner membrane. It carries out the reaction (R)-lactate + a quinone = a quinol + pyruvate. In terms of biological role, catalyzes the oxidation of D-lactate to pyruvate. In Haemophilus influenzae (strain ATCC 51907 / DSM 11121 / KW20 / Rd), this protein is Quinone-dependent D-lactate dehydrogenase.